The primary structure comprises 473 residues: Sensor histidine kinase YclK (473 aa).

At 1–9 (MMKIKYLYQ) the chain is on the cytoplasmic side. Residues 10-30 (LLLSHISILILAFVIIISLFS) form a helical membrane-spanning segment. Topologically, residues 31–164 (HFVKEFAYQN…GVEQMVNQVN (134 aa)) are extracellular. The helical transmembrane segment at 165–185 (LYMFYAVISTLVITILVSWLL) threads the bilayer. The Cytoplasmic segment spans residues 186 to 473 (SKFHVKRIQK…IRLPLTAKQQ (288 aa)). The region spanning 187-239 (KFHVKRIQKLREATDKVASGDYDIHLENSYGDEIGVLASDFNIMAKKLKQSRD) is the HAMP domain. One can recognise a Histidine kinase domain in the interval 254-470 (DVSHELKTPL…KFIIRLPLTA (217 aa)). His257 bears the Phosphohistidine; by autocatalysis mark.

The protein resides in the cell membrane. It carries out the reaction ATP + protein L-histidine = ADP + protein N-phospho-L-histidine.. In terms of biological role, could be member of the two-component regulatory system YclK/YclJ. Potentially phosphorylates YclJ. The chain is Sensor histidine kinase YclK (yclK) from Bacillus subtilis (strain 168).